A 1414-amino-acid chain; its full sequence is Calcium-transporting ATPase 2 (1414 aa).

Disordered stretches follow at residues 1–231 (MSRN…PSRL) and 265–294 (AVGTDEGNAENGAPRSSADMPGGNGPQWRA). The Cytoplasmic segment spans residues 1–327 (MSRNNPPPVI…LLMWLAFKDK (327 aa)). Low complexity-rich tracts occupy residues 33 to 53 (PTPTLVIPGSPASESSHPESP) and 75 to 96 (SPTPSYSSALTPPSPTLTSSSS). Residues 179–189 (DGDRGEDDANK) show a composition bias toward basic and acidic residues. The segment covering 190 to 201 (KGKKDKKGKKGK) has biased composition (basic residues). Positions 202–229 (KDKEEPPSAHLDPDKDKTDPTPFREKPS) are enriched in basic and acidic residues. Residues 328–348 (VLILLSVAAVVSLALGLYQDL) form a helical membrane-spanning segment. Topologically, residues 349 to 370 (GTPPKIIYNDECPDGCEEAQVD) are vacuolar. Residues 371–391 (WVEGVAIVVAIIIVVLVGSIN) form a helical membrane-spanning segment. Residues 392 to 541 (DWQKERQFKK…TPLQIKLNHL (150 aa)) lie on the Cytoplasmic side of the membrane. The helical transmembrane segment at 542-562 (AELIAKLGGASGLLLFIALMI) threads the bilayer. The Vacuolar portion of the chain corresponds to 563 to 585 (RFFVQLKTNPDRSANDKAQSFIQ). A helical transmembrane segment spans residues 586–606 (ILIIAVTLVVVAVPEGLPLAV). Residues Val595 and Glu600 each coordinate Ca(2+). Residues 607 to 1040 (TLALAFATKR…GRCVNDSVKK (434 aa)) are Cytoplasmic-facing. Asp642 (4-aspartylphosphate intermediate) is an active-site residue. Mg(2+)-binding residues include Asp642 and Thr644. ATP contacts are provided by residues Thr644, Glu737, Arg779, 909–911 (TGD), Arg958, and Lys964. Asp983 serves as a coordination point for Mg(2+). Asn986 is an ATP binding site. The helical transmembrane segment at 1041–1061 (FLQFQISVNITAVFITFISAV) threads the bilayer. Asn1049 serves as a coordination point for Ca(2+). Over 1062–1068 (ASSSEES) the chain is Vacuolar. Residues 1069–1089 (VLTAVQLLWVNLIMDTFAALA) traverse the membrane as a helical segment. Ca(2+) is bound by residues Asn1079 and Asp1083. The Cytoplasmic portion of the chain corresponds to 1090–1118 (LATDPATESSLDRKPDRKNAPLITVEMFK). Residues 1119–1139 (MIMVQAIYQIIVCLVLHFAGL) form a helical membrane-spanning segment. The Vacuolar segment spans residues 1140 to 1153 (KILGLEDNDQNNTE). The helical transmembrane segment at 1154–1171 (LGALVFNCFVFCQIFNQL) threads the bilayer. Residues 1172–1191 (NCRRLDRKLNVLEGFWRNWY) lie on the Cytoplasmic side of the membrane. A helical transmembrane segment spans residues 1192–1212 (FIIIFLIMVGGQILIVEVGGA). Glu1208 provides a ligand contact to Ca(2+). Topologically, residues 1213 to 1223 (AFQVTRLGGRD) are vacuolar. The chain crosses the membrane as a helical span at residues 1224–1244 (WGITLVIGALSLPIGALVRLT). Residues 1245–1414 (PTGPFARLLV…GLSSGDANNV (170 aa)) are Cytoplasmic-facing. Residues 1376-1414 (PRTNPDDPLYAKFGLQPPESRGSSVSGAEGLSSGDANNV) form a disordered region.

Belongs to the cation transport ATPase (P-type) (TC 3.A.3) family.

It localises to the vacuole membrane. The enzyme catalyses Ca(2+)(in) + ATP + H2O = Ca(2+)(out) + ADP + phosphate + H(+). This magnesium-dependent enzyme catalyzes the hydrolysis of ATP coupled with the transport of calcium. Transports calcium to the vacuole and participates in the control of cytosolic free calcium. The protein is Calcium-transporting ATPase 2 of Cryptococcus neoformans var. grubii serotype A (strain H99 / ATCC 208821 / CBS 10515 / FGSC 9487) (Filobasidiella neoformans var. grubii).